The primary structure comprises 120 residues: Large ribosomal subunit protein bL20 (120 aa).

This sequence belongs to the bacterial ribosomal protein bL20 family.

In terms of biological role, binds directly to 23S ribosomal RNA and is necessary for the in vitro assembly process of the 50S ribosomal subunit. It is not involved in the protein synthesizing functions of that subunit. The polypeptide is Large ribosomal subunit protein bL20 (Karelsulcia muelleri (strain GWSS) (Sulcia muelleri)).